The following is a 329-amino-acid chain: Glycerol-3-phosphate dehydrogenase [NAD(P)+] (329 aa).

Residues Ser-10, Trp-11, Arg-31, and Lys-105 each coordinate NADPH. Sn-glycerol 3-phosphate is bound by residues Lys-105, Gly-134, and Ser-136. NADPH is bound at residue Ala-138. Sn-glycerol 3-phosphate-binding residues include Lys-189, Asp-242, Ser-252, Arg-253, and Asn-254. Lys-189 (proton acceptor) is an active-site residue. Residue Arg-253 coordinates NADPH. The NADPH site is built by Val-277 and Glu-279.

The protein belongs to the NAD-dependent glycerol-3-phosphate dehydrogenase family.

It localises to the cytoplasm. It catalyses the reaction sn-glycerol 3-phosphate + NAD(+) = dihydroxyacetone phosphate + NADH + H(+). It carries out the reaction sn-glycerol 3-phosphate + NADP(+) = dihydroxyacetone phosphate + NADPH + H(+). It participates in membrane lipid metabolism; glycerophospholipid metabolism. Catalyzes the reduction of the glycolytic intermediate dihydroxyacetone phosphate (DHAP) to sn-glycerol 3-phosphate (G3P), the key precursor for phospholipid synthesis. The sequence is that of Glycerol-3-phosphate dehydrogenase [NAD(P)+] from Neisseria gonorrhoeae (strain ATCC 700825 / FA 1090).